A 152-amino-acid chain; its full sequence is Multiprotein-bridging factor 1 (152 aa).

Polar residues-rich tracts occupy residues 1-11 (MSSDWDTNTVI) and 22-32 (PRQQVARTQGQ). Residues 1 to 32 (MSSDWDTNTVIGQRVRTGGSGPRQQVARTQGQ) are disordered. An HTH cro/C1-type domain is found at 86-140 (IAKGRGDKGMTQKDLATRINEKPTVINDYEAGRAIPNQQILAKMERALGVKLRGK). A DNA-binding region (H-T-H motif) is located at residues 97–116 (QKDLATRINEKPTVINDYEA).

Belongs to the MBF1 family.

Functionally, transcriptional coactivator that stimulates GCN4-dependent transcriptional activity by bridging the DNA-binding region of GCN4 and TBP (SPT15), thereby recruiting TBP to GCN4-bound promoters. Involved in induction of the ribosome quality control (RQC) pathway; a pathway that degrades nascent peptide chains during problematic translation. Required to prevent stalled ribosomes from frameshifting. This is Multiprotein-bridging factor 1 (MBF1) from Eremothecium gossypii (strain ATCC 10895 / CBS 109.51 / FGSC 9923 / NRRL Y-1056) (Yeast).